A 186-amino-acid chain; its full sequence is ATP synthase subunit delta (186 aa).

This sequence belongs to the ATPase delta chain family. As to quaternary structure, F-type ATPases have 2 components, F(1) - the catalytic core - and F(0) - the membrane proton channel. F(1) has five subunits: alpha(3), beta(3), gamma(1), delta(1), epsilon(1). CF(0) has four main subunits: a(1), b(1), b'(1) and c(10-14). The alpha and beta chains form an alternating ring which encloses part of the gamma chain. F(1) is attached to F(0) by a central stalk formed by the gamma and epsilon chains, while a peripheral stalk is formed by the delta, b and b' chains.

It is found in the cell inner membrane. Its function is as follows. F(1)F(0) ATP synthase produces ATP from ADP in the presence of a proton or sodium gradient. F-type ATPases consist of two structural domains, F(1) containing the extramembraneous catalytic core and F(0) containing the membrane proton channel, linked together by a central stalk and a peripheral stalk. During catalysis, ATP synthesis in the catalytic domain of F(1) is coupled via a rotary mechanism of the central stalk subunits to proton translocation. This protein is part of the stalk that links CF(0) to CF(1). It either transmits conformational changes from CF(0) to CF(1) or is implicated in proton conduction. This is ATP synthase subunit delta from Rhodopseudomonas palustris (strain BisA53).